The sequence spans 404 residues: G-protein coupled receptor 143 (404 aa).

Residues 1–28 (MASPRLGTFCCPTRDAATQLVLSFQPRA) are Extracellular-facing. Residues 29–49 (FHALCLGSGGLRLALGLLQLL) traverse the membrane as a helical segment. The Cytoplasmic segment spans residues 50–78 (PGRRPAGPGSPATSPPASVRILRAAAACD). The chain crosses the membrane as a helical span at residues 79-99 (LLGCLGMVIRSTVWLGFPNFV). Residues 100 to 124 (DSVSDMNHTEIWPAAFCVGSAMWIQ) are Extracellular-facing. The N-linked (GlcNAc...) asparagine glycan is linked to Asn106. Residues 125-145 (LLYSACFWWLFCYAVDAYLVI) traverse the membrane as a helical segment. Topologically, residues 146 to 149 (RRSA) are cytoplasmic. The helical transmembrane segment at 150-170 (GLSTILLYHIMAWGLATLLCV) threads the bilayer. Topologically, residues 171 to 191 (EGAAMLYYPSVSRCERGLDHA) are extracellular. A helical membrane pass occupies residues 192-212 (IPHYVTMYLPLLLVLVANPIL). Residues 213 to 248 (FQKTVTAVASLLKGRQGIYTENERRMGAVIKIRFFK) lie on the Cytoplasmic side of the membrane. The segment at 221-238 (ASLLKGRQGIYTENERRM) is necessary for its G protein-activation ability and normal distribution of melanosomes. Positions 222 to 231 (SLLKGRQGIY) match the lysosomal/melanosomal membrane localization signal motif. A helical transmembrane segment spans residues 249-269 (IMLVLIICWLSNIINESLLFY). Residues 270-292 (LEMQTDINGGSLKPVRTAAKTTW) lie on the Extracellular side of the membrane. Residues 293 to 313 (FIMGILNPAQGFLLSLAFYGW) form a helical membrane-spanning segment. Topologically, residues 314–404 (TGCSLGFQSP…DPALPTHGDL (91 aa)) are cytoplasmic. Positions 329–330 (WE) match the lysosomal/melanosomal membrane localization signal motif. The disordered stretch occupies residues 338 to 404 (EGAHPSPLMP…DPALPTHGDL (67 aa)). Positions 355–366 (KVSQVGGQTSDE) are enriched in polar residues.

Belongs to the G-protein coupled receptor OA family. As to quaternary structure, interacts with heterotrimeric G(i) proteins. Interacts with ARRB1 and ARRB2. Interacts with MLANA. Post-translationally, glycosylated. In terms of processing, phosphorylated. Expressed at high levels in the retina, including the retinal pigment epithelium (RPE), and in melanocytes. Weak expression is observed in brain and adrenal gland.

It localises to the melanosome membrane. The protein resides in the lysosome membrane. The protein localises to the apical cell membrane. Its function is as follows. Receptor for tyrosine, L-DOPA and dopamine. After binding to L-DOPA, stimulates Ca(2+) influx into the cytoplasm, increases secretion of the neurotrophic factor SERPINF1 and relocalizes beta arrestin at the plasma membrane; this ligand-dependent signaling occurs through a G(q)-mediated pathway in melanocytic cells. Its activity is mediated by G proteins which activate the phosphoinositide signaling pathway. Also plays a role as an intracellular G protein-coupled receptor involved in melanosome biogenesis, organization and transport. The protein is G-protein coupled receptor 143 (GPR143) of Homo sapiens (Human).